Consider the following 446-residue polypeptide: Golgi reassembly-stacking protein 1 (446 aa).

Residues 1-20 (MGLGASSEQPAGGEGFHLHG) form a disordered region. The N-myristoyl glycine moiety is linked to residue Gly2. PDZ GRASP-type domains are found at residues 14-104 (EGFH…FCSF) and 110-198 (HVWH…YGYL). Residues 14–214 (EGFHLHGVQE…PSSQHKKPPG (201 aa)) form a GRASP region. Residues His17, His19, and Cys102 each contribute to the Zn(2+) site. The tract at residues 189–201 (LGCGIGYGYLHRI) is essential for interaction with GOLGA2/GM130. Disordered stretches follow at residues 202-252 (PTQP…LGSR) and 343-446 (VSGP…EPGL). A phosphothreonine mark is found at Thr216, Thr220, and Thr224. Over residues 343-354 (VSGPEDIGSSSS) the composition is skewed to low complexity. Phosphoserine occurs at positions 365, 367, and 376.

It belongs to the GORASP family. As to quaternary structure, homodimer. Forms higher-order oligomers under interphase but not mitotic conditions. Dimers of the protein on one membrane might be able to interact with dimers on another and so stack cisternae. Interacts with the C-terminus of GOLGA2/GM130 under both mitotic and non-mitotic conditions. The interaction is critical for the correct targeting of both proteins to the cis-Golgi. Interacts with TMED2 and TMED3. Phosphorylated by CDC2/B1 and PLK kinases during mitosis. Phosphorylation cycle correlates with the cisternal stacking cycle. Phosphorylation of the homodimer prevents the association of dimers into higher-order oligomers, leading to cisternal unstacking. Post-translationally, target for caspase-3 cleavage during apoptosis. The cleavage contributes to Golgi fragmentation and occurs very early in the execution phase of apoptosis. In terms of processing, myristoylated.

It localises to the golgi apparatus. Its subcellular location is the cis-Golgi network membrane. Key structural protein of the Golgi apparatus. The membrane cisternae of the Golgi apparatus adhere to each other to form stacks, which are aligned side by side to form the Golgi ribbon. Acting in concert with GORASP2/GRASP55, is required for the formation and maintenance of the Golgi ribbon, and may be dispensable for the formation of stacks. However, other studies suggest that GORASP1 plays an important role in assembly and membrane stacking of the cisternae, and in the reassembly of Golgi stacks after breakdown during mitosis. Caspase-mediated cleavage of GORASP1 is required for fragmentation of the Golgi during apoptosis. Also mediates, via its interaction with GOLGA2/GM130, the docking of transport vesicles with the Golgi membranes. Mediates ER stress-induced unconventional (ER/Golgi-independent) trafficking of core-glycosylated CFTR to cell membrane. The protein is Golgi reassembly-stacking protein 1 (Gorasp1) of Mus musculus (Mouse).